The sequence spans 261 residues: Uridine-cytidine kinase 2 (261 aa).

The disordered stretch occupies residues 1 to 24 (MAGDSEQALPKHSPQNGQPFLIGV). 26–34 (GGTASGKSS) is a binding site for ATP. Positions 83, 111, 116, 165, 175, and 183 each coordinate substrate. Residue Asp212 participates in ATP binding. Positions 238 to 247 (NGYTNGFTSP) are enriched in polar residues. The tract at residues 238 to 261 (NGYTNGFTSPRTRHPSDSNSSRPH) is disordered.

It belongs to the uridine kinase family. Homotetramer.

The catalysed reaction is uridine + ATP = UMP + ADP + H(+). The enzyme catalyses cytidine + ATP = CMP + ADP + H(+). Its pathway is pyrimidine metabolism; CTP biosynthesis via salvage pathway; CTP from cytidine: step 1/3. It participates in pyrimidine metabolism; UMP biosynthesis via salvage pathway; UMP from uridine: step 1/1. Phosphorylates uridine and cytidine to uridine monophosphate and cytidine monophosphate. Does not phosphorylate deoxyribonucleosides or purine ribonucleosides. Can use ATP or GTP as a phosphate donor. The sequence is that of Uridine-cytidine kinase 2 (uck2) from Xenopus tropicalis (Western clawed frog).